Reading from the N-terminus, the 413-residue chain is Gamma-glutamyl phosphate reductase (413 aa).

This sequence belongs to the gamma-glutamyl phosphate reductase family.

It localises to the cytoplasm. The enzyme catalyses L-glutamate 5-semialdehyde + phosphate + NADP(+) = L-glutamyl 5-phosphate + NADPH + H(+). It functions in the pathway amino-acid biosynthesis; L-proline biosynthesis; L-glutamate 5-semialdehyde from L-glutamate: step 2/2. Functionally, catalyzes the NADPH-dependent reduction of L-glutamate 5-phosphate into L-glutamate 5-semialdehyde and phosphate. The product spontaneously undergoes cyclization to form 1-pyrroline-5-carboxylate. This chain is Gamma-glutamyl phosphate reductase, found in Caulobacter vibrioides (strain ATCC 19089 / CIP 103742 / CB 15) (Caulobacter crescentus).